Consider the following 103-residue polypeptide: Small ribosomal subunit protein uS10 (103 aa).

Belongs to the universal ribosomal protein uS10 family. Part of the 30S ribosomal subunit.

In terms of biological role, involved in the binding of tRNA to the ribosomes. In Neisseria gonorrhoeae, this protein is Small ribosomal subunit protein uS10.